A 664-amino-acid chain; its full sequence is Acetolactate synthase 2, chloroplastic (664 aa).

Residues 1-34 (MAAAAAAPSPSFSKTLSSSSSKSSTLLPRSTFPF) are compositionally biased toward low complexity. The disordered stretch occupies residues 1-51 (MAAAAAAPSPSFSKTLSSSSSKSSTLLPRSTFPFPHHPHKTTPPPLHLTPT). The transit peptide at 1–91 (MAAAAAAPSP…VSRFAPDEPR (91 aa)) directs the protein to the chloroplast. Glutamate 138 is a binding site for thiamine diphosphate. Cysteine 158 and cysteine 304 are disulfide-bonded. Residues arginine 240, 346–367 (HGTV…FGVR), and 389–408 (DIDS…ICAD) contribute to the FAD site. The thiamine pyrophosphate binding stretch occupies residues 481–561 (QHQMWAAQYY…VKIMLLNNQH (81 aa)). Residues aspartate 532 and asparagine 559 each contribute to the Mg(2+) site.

It belongs to the TPP enzyme family. The cofactor is Mg(2+). Thiamine diphosphate is required as a cofactor.

It is found in the plastid. It localises to the chloroplast. The enzyme catalyses 2 pyruvate + H(+) = (2S)-2-acetolactate + CO2. The protein operates within amino-acid biosynthesis; L-isoleucine biosynthesis; L-isoleucine from 2-oxobutanoate: step 1/4. Its pathway is amino-acid biosynthesis; L-valine biosynthesis; L-valine from pyruvate: step 1/4. This is Acetolactate synthase 2, chloroplastic (ALS SURB) from Nicotiana tabacum (Common tobacco).